The following is a 545-amino-acid chain: Esterase-5B (545 aa).

A signal peptide spans 1–19; that stretch reads MYCAKLILLLGCFWISSSA. Residues Cys-84 and Cys-103 are joined by a disulfide bond. N-linked (GlcNAc...) asparagine glycosylation is present at Asn-113. Residue Ser-207 is the Acyl-ester intermediate of the active site. Cys-259 and Cys-271 are joined by a disulfide. Asn-421 carries an N-linked (GlcNAc...) asparagine glycan. Residue His-467 is the Charge relay system of the active site. N-linked (GlcNAc...) asparagine glycosylation is present at Asn-507. A disulfide bond links Cys-515 and Cys-536.

This sequence belongs to the type-B carboxylesterase/lipase family. Homodimer.

It is found in the secreted. It catalyses the reaction a carboxylic ester + H2O = an alcohol + a carboxylate + H(+). This chain is Esterase-5B (Est-5B), found in Drosophila persimilis (Fruit fly).